Reading from the N-terminus, the 387-residue chain is Exodeoxyribonuclease 7 large subunit (387 aa).

Belongs to the XseA family. As to quaternary structure, heterooligomer composed of large and small subunits.

It is found in the cytoplasm. The catalysed reaction is Exonucleolytic cleavage in either 5'- to 3'- or 3'- to 5'-direction to yield nucleoside 5'-phosphates.. Its function is as follows. Bidirectionally degrades single-stranded DNA into large acid-insoluble oligonucleotides, which are then degraded further into small acid-soluble oligonucleotides. In Campylobacter jejuni (strain RM1221), this protein is Exodeoxyribonuclease 7 large subunit.